Reading from the N-terminus, the 849-residue chain is Formin-like protein 4 (849 aa).

Positions methionine 1–alanine 22 are cleaved as a signal peptide. The tract at residues isoleucine 36–threonine 104 is disordered. Residues tryptophan 38 to proline 52 are compositionally biased toward pro residues. A compositionally biased stretch (low complexity) spans aspartate 53–proline 64. Residues isoleucine 109–phenylalanine 129 form a helical membrane-spanning segment. Residues alanine 185–aspartate 194 are compositionally biased toward basic and acidic residues. Positions alanine 185–alanine 364 are disordered. Over residues glycine 234–threonine 246 the composition is skewed to gly residues. A compositionally biased stretch (low complexity) spans tryptophan 247–alanine 279. Composition is skewed to pro residues over residues alanine 280 to proline 297, proline 324 to serine 339, and proline 346 to glycine 360. An FH2 domain is found at glutamate 406–alanine 823.

The protein belongs to the formin-like family. Class-I subfamily.

It localises to the membrane. This Oryza sativa subsp. japonica (Rice) protein is Formin-like protein 4 (FH4).